Here is a 286-residue protein sequence, read N- to C-terminus: Meiotically up-regulated gene 64 protein (286 aa).

It is found in the cytoplasm. Has a role in meiosis. This chain is Meiotically up-regulated gene 64 protein (mug64), found in Schizosaccharomyces pombe (strain 972 / ATCC 24843) (Fission yeast).